A 40-amino-acid polypeptide reads, in one-letter code: Dolichyl-diphosphooligosaccharide--protein glycosyltransferase subunit 4 (40 aa).

The Lumenal portion of the chain corresponds to 1 to 4 (MITD). Residues 5 to 25 (VQLAIFSNVLGVFLFLLVVAY) traverse the membrane as a helical segment. Over 26-40 (HYINANTGKIGPKAK) the chain is Cytoplasmic.

Belongs to the OST4 family. As to quaternary structure, component of the oligosaccharyltransferase (OST) complex.

It localises to the endoplasmic reticulum membrane. Subunit of the oligosaccharyl transferase (OST) complex that catalyzes the initial transfer of a defined glycan (Glc(3)Man(9)GlcNAc(2) in eukaryotes) from the lipid carrier dolichol-pyrophosphate to an asparagine residue within an Asn-X-Ser/Thr consensus motif in nascent polypeptide chains, the first step in protein N-glycosylation. N-glycosylation occurs cotranslationally and the complex associates with the Sec61 complex at the channel-forming translocon complex that mediates protein translocation across the endoplasmic reticulum (ER). All subunits are required for a maximal enzyme activity. This chain is Dolichyl-diphosphooligosaccharide--protein glycosyltransferase subunit 4, found in Drosophila willistoni (Fruit fly).